A 665-amino-acid polypeptide reads, in one-letter code: Kinesin-like protein KIF22 (665 aa).

Positions 43–368 constitute a Kinesin motor domain; that stretch reads RVRVAVRLRP…LNFAARSKEV (326 aa). 127–134 contributes to the ATP binding site; sequence GPTGAGKT. The interval 379–428 is disordered; it reads QPHALGPVKLSQKELLGPPEAKRARGPEEEEIGSPEPMAAPASASQKLSP. Phosphoserine occurs at positions 412, 427, and 452. The span at 412-428 shows a compositional bias: low complexity; sequence SPEPMAAPASASQKLSP. Lys-465 participates in a covalent cross-link: Glycyl lysine isopeptide (Lys-Gly) (interchain with G-Cter in SUMO2). Residues 465-508 are a coiled coil; the sequence is KRERMVLMKTVEEKDLEIERLKTKQKELEAKMLAQKAEEKENHC. Ser-543, Ser-562, and Ser-581 each carry phosphoserine.

Belongs to the TRAFAC class myosin-kinesin ATPase superfamily. Kinesin family. In terms of assembly, interacts with FAM83D. Interacts with SIAH1. Post-translationally, ubiquitinated; mediated by SIAH1 and leading to its subsequent proteasomal degradation. In terms of tissue distribution, expressed in bone, cartilage, joint capsule, ligament, skin, and primary cultured chondrocytes.

The protein localises to the nucleus. Its subcellular location is the cytoplasm. It is found in the cytoskeleton. Kinesin family member that is involved in spindle formation and the movements of chromosomes during mitosis and meiosis. Binds to microtubules and to DNA. Plays a role in congression of laterally attached chromosomes in NDC80-depleted cells. This is Kinesin-like protein KIF22 (KIF22) from Homo sapiens (Human).